The following is a 207-amino-acid chain: Methylated-DNA--protein-cysteine methyltransferase (207 aa).

DNA is bound by residues Tyr123 and Arg137. Cys154 acts as the Nucleophile; methyl group acceptor in catalysis. Ser160 contacts DNA.

Belongs to the MGMT family.

The protein localises to the nucleus. It carries out the reaction a 6-O-methyl-2'-deoxyguanosine in DNA + L-cysteinyl-[protein] = S-methyl-L-cysteinyl-[protein] + a 2'-deoxyguanosine in DNA. The enzyme catalyses a 4-O-methyl-thymidine in DNA + L-cysteinyl-[protein] = a thymidine in DNA + S-methyl-L-cysteinyl-[protein]. Involved in the cellular defense against the biological effects of O6-methylguanine (O6-MeG) and O4-methylthymine (O4-MeT) in DNA. Repairs the methylated nucleobase in DNA by stoichiometrically transferring the methyl group to a cysteine residue in the enzyme. This is a suicide reaction: the enzyme is irreversibly inactivated. In Candida glabrata (strain ATCC 2001 / BCRC 20586 / JCM 3761 / NBRC 0622 / NRRL Y-65 / CBS 138) (Yeast), this protein is Methylated-DNA--protein-cysteine methyltransferase (MGT1).